The following is a 654-amino-acid chain: Pentatricopeptide repeat-containing protein At3g16610 (654 aa).

PPR repeat units lie at residues 1–32 (MFLS…SLTL), 34–64 (SSTV…IPHP), 67–101 (NPIA…GVRP), 102–136 (TKYT…DFAT), 137–171 (DMYV…DMVA), 172–203 (WNAM…GLSP), 204–238 (NLST…GFSN), 239–269 (DLVV…DFKK), 270–304 (NEVT…DNVA), 307–341 (TPVA…GFIL), 342–372 (DLTV…IGLK), 373–407 (DVIS…GIRP), 408–442 (DITT…GYAV), 443–473 (NTSI…MHKR), 474–508 (DIVS…GVNP), 509–543 (DEVT…DFNV), and 546–576 (RIDH…MPFE). Residues 581–654 (VLGTLLSACW…KTPGYSWVDV (74 aa)) form a type E motif; degenerate region.

The protein belongs to the PPR family. PCMP-E subfamily.

This is Pentatricopeptide repeat-containing protein At3g16610 (PCMP-E91) from Arabidopsis thaliana (Mouse-ear cress).